The primary structure comprises 235 residues: Chalcone--flavanone isomerase 1 (235 aa).

Substrate is bound by residues Thr-50 and Ser-192.

This sequence belongs to the chalcone isomerase family.

The enzyme catalyses a chalcone = a flavanone.. Its pathway is secondary metabolite biosynthesis; flavonoid biosynthesis. Functionally, catalyzes the intramolecular cyclization of bicyclic chalcones into tricyclic (S)-flavanones. Responsible for the isomerization of 4,2',4',6'-tetrahydroxychalcone (also termed chalcone) into naringenin. The polypeptide is Chalcone--flavanone isomerase 1 (CHI1) (Chrysanthemum morifolium (Florist's daisy)).